Consider the following 241-residue polypeptide: Sensory transduction protein LytT (241 aa).

The region spanning 3–117 (RVLIVDDEML…RIQQTLKKYK (115 aa)) is the Response regulatory domain. Aspartate 54 carries the post-translational modification 4-aspartylphosphate. The HTH LytTR-type domain occupies 137-241 (LALSVGESIV…AKELKKLLHI (105 aa)).

Phosphorylated by LytS.

It localises to the cytoplasm. In terms of biological role, member of the two-component regulatory system LytS/LytT that probably regulates genes involved in cell wall metabolism. In Bacillus subtilis (strain 168), this protein is Sensory transduction protein LytT (lytT).